The following is a 570-amino-acid chain: D-xylulose kinase A (570 aa).

His95, Arg166, Asp282, and Asn283 together coordinate substrate. ATP contacts are provided by residues Trp364, 469–470 (GG), and Asn473.

The protein belongs to the FGGY kinase family.

It is found in the cytoplasm. The enzyme catalyses D-xylulose + ATP = D-xylulose 5-phosphate + ADP + H(+). Its function is as follows. Highly specific D-xylulose kinase which participates in the catabolism of xylose. Xylose is a major component of hemicelluloses such as xylan. Most fungi utilize D-xylose via three enzymatic reactions, xylose reductase (XR), xylitol dehydrogenase (XDH), and xylulokinase, to form xylulose 5-phosphate, which enters pentose phosphate pathway. In Aspergillus niger, this protein is D-xylulose kinase A (xkiA).